A 208-amino-acid chain; its full sequence is MQARGTVKVQGDAKVDGKMSTGQHSHHQHLNSTQANATTTALEYRAMNRPLYRGPISHNIISEMAEGFYVLSGGYKKLFIPSKDVYALMQNVGMHLTEEEFHDALRVIGQSEPQNADELSFSDFLLLMTREVDDTMADELRSAFFHYDKYKTGYVTRKQFTELFATLGERSTPEELEELLAVAEVDETDDKIDYNRFVNELTSRVNCM.

The disordered stretch occupies residues methionine 1–glutamine 34. EF-hand domains follow at residues methionine 64–glutamate 98, glutamate 99–aspartate 134, threonine 135–arginine 170, and serine 171–asparagine 206. Residues glutamate 118, aspartate 123, aspartate 148, threonine 152, and tyrosine 154 each contribute to the Ca(2+) site.

This chain is EF-hand protein 5 variant 1, found in Trypanosoma cruzi.